The chain runs to 359 residues: Cell division protein ZipA (359 aa).

Residues Met-1 to Asn-4 lie on the Periplasmic side of the membrane. A helical transmembrane segment spans residues Thr-5 to Ser-25. Residues Asn-26–Lys-359 lie on the Cytoplasmic side of the membrane. A disordered region spans residues Pro-78–Pro-101.

The protein belongs to the ZipA family. In terms of assembly, interacts with FtsZ via their C-terminal domains.

It localises to the cell inner membrane. In terms of biological role, essential cell division protein that stabilizes the FtsZ protofilaments by cross-linking them and that serves as a cytoplasmic membrane anchor for the Z ring. Also required for the recruitment to the septal ring of downstream cell division proteins. In Mannheimia succiniciproducens (strain KCTC 0769BP / MBEL55E), this protein is Cell division protein ZipA.